A 1976-amino-acid chain; its full sequence is Myosin-10 (1976 aa).

Arginine 18 is modified (omega-N-methylarginine). The Myosin N-terminal SH3-like domain maps to 31–81; the sequence is TAKKLVWIPSERHGFEAASIKEERGDEVMVELAENGKKAMVNKDDIQKMNP. The Myosin motor domain occupies 85–783; sequence SKVEDMAELT…VLAHLEEERD (699 aa). 178 to 185 is a binding site for ATP; sequence GESGAGKT. At lysine 442 the chain carries N6-acetyllysine. Residues 661–683 are actin-binding; sequence LTKLMATLRNTNPNFVRCIIPNH. One can recognise an IQ domain in the interval 786–815; the sequence is ITDIIIFFQAVCRGYLARKAFAKKQQQLSA. A coiled-coil region spans residues 845–1976; it reads LQVTRQEEEL…VNETQPPQSE (1132 aa). The interval 1125 to 1175 is disordered; the sequence is EDFESEKASRNKAEKQKRDLSEELEALKTELEDTLDTTAAQQELRTKREQE. Residues 1129–1155 are compositionally biased toward basic and acidic residues; it reads SEKASRNKAEKQKRDLSEELEALKTEL. Serine 1145 is subject to Phosphoserine. 3 positions are modified to N6-acetyllysine: lysine 1241, lysine 1301, and lysine 1645. Disordered stretches follow at residues 1697-1718 and 1874-1976; these read ASSERARRHAEQERDELADEIA and KANA…PQSE. Basic and acidic residues predominate over residues 1698–1708; the sequence is SSERARRHAEQ. Arginine 1930 bears the Omega-N-methylarginine mark. Phosphoserine occurs at positions 1935, 1937, 1938, and 1939. At arginine 1940 the chain carries Omega-N-methylarginine. Phosphoserine occurs at positions 1952 and 1956. Threonine 1960 bears the Phosphothreonine mark. A compositionally biased stretch (polar residues) spans 1967-1976; sequence VNETQPPQSE. The residue at position 1975 (serine 1975) is a Phosphoserine.

The protein belongs to the TRAFAC class myosin-kinesin ATPase superfamily. Myosin family. In terms of assembly, myosin is a hexameric protein that consists of 2 heavy chain subunits (MHC), 2 alkali light chain subunits (MLC) and 2 regulatory light chain subunits (MLC-2). Interacts with PLEKHG6. Interacts with ECPAS. Interacts with KIF26B. Interacts with LARP6. Interacts with MCC. Interacts with CFAP95. Post-translationally, phosphorylated by ABL2.

The protein localises to the cell projection. It is found in the lamellipodium. Functionally, involved with LARP6 in the stabilization of type I collagen mRNAs for CO1A1 and CO1A2. During cell spreading, plays an important role in cytoskeleton reorganization, focal contacts formation (in the central part but not the margins of spreading cells), and lamellipodial extension; this function is mechanically antagonized by MYH9. Cellular myosin that appears to play a role in cytokinesis, cell shape, and specialized functions such as secretion and capping. This is Myosin-10 (Myh10) from Rattus norvegicus (Rat).